Here is a 535-residue protein sequence, read N- to C-terminus: Probable histone-arginine methyltransferase 1.3 (535 aa).

The residue at position 1 (Met1) is an N-acetylmethionine. Positions 141-456 (EASSAKMYFH…QSYTIDLTLS (316 aa)) constitute an SAM-dependent MTase PRMT-type domain. S-adenosyl-L-methionine-binding residues include Gln158, Arg167, Gly191, Glu213, and Glu243. Residues Glu257 and Glu266 contribute to the active site. Ser271 lines the S-adenosyl-L-methionine pocket. The segment at 494 to 517 (VAQEPPLQPQPELSTQQDIQTPND) is disordered. The segment covering 507-516 (STQQDIQTPN) has biased composition (polar residues).

It belongs to the class I-like SAM-binding methyltransferase superfamily. Protein arginine N-methyltransferase family. As to quaternary structure, interacts with PQT3 in the nucleus. In terms of processing, ubiquitinated by PQT3.

It localises to the nucleus. The protein resides in the cytoplasm. The catalysed reaction is L-arginyl-[protein] + 2 S-adenosyl-L-methionine = N(omega),N(omega)-dimethyl-L-arginyl-[protein] + 2 S-adenosyl-L-homocysteine + 2 H(+). Its function is as follows. Methylates (mono- and asymmetric dimethylation) the guanidino nitrogens of arginyl residues in several proteins involved in DNA packaging, transcription regulation, and mRNA stability. Recruited to promoters upon gene activation, methylates histone H3 and activates transcription via chromatin remodeling. Positive regulator in the oxidative stress tolerance that promotes the expression of enzymes preventing oxidative stress such as APX1 and GPX1 by histone methylation (H3R17me2a). Confers tolerance to cadmium CdCl(2) and salt NaCl stresses. This Arabidopsis thaliana (Mouse-ear cress) protein is Probable histone-arginine methyltransferase 1.3 (PRMT13).